A 274-amino-acid polypeptide reads, in one-letter code: Siroheme biosynthesis protein MET8 (274 aa).

NAD(+) is bound by residues glutamate 23 to valine 24, serine 43 to aspartate 45, and phenylalanine 93. Aspartate 141 (proton acceptor) is an active-site residue.

Belongs to the precorrin-2 dehydrogenase / sirohydrochlorin ferrochelatase family. MET8 subfamily. In terms of assembly, homodimer.

It carries out the reaction precorrin-2 + NAD(+) = sirohydrochlorin + NADH + 2 H(+). It catalyses the reaction siroheme + 2 H(+) = sirohydrochlorin + Fe(2+). It functions in the pathway porphyrin-containing compound metabolism; siroheme biosynthesis; siroheme from sirohydrochlorin: step 1/1. It participates in porphyrin-containing compound metabolism; siroheme biosynthesis; sirohydrochlorin from precorrin-2: step 1/1. Functionally, catalyzes the conversion of precorrin-2 into siroheme. This reaction consist of the NAD-dependent oxidation of precorrin-2 into sirohydrochlorin and its subsequent ferrochelation into siroheme. This Saccharomyces cerevisiae (strain ATCC 204508 / S288c) (Baker's yeast) protein is Siroheme biosynthesis protein MET8.